The sequence spans 126 residues: uncharacterized protein (126 aa).

This is an uncharacterized protein from His1 virus (isolate Australia/Victoria) (His1V).